A 214-amino-acid polypeptide reads, in one-letter code: Phosphatidyl-N-methylethanolamine N-methyltransferase (214 aa).

Residues 1-19 (MPLVALGVADLFNFVDYSK) lie on the Lumenal side of the membrane. The helical intramembrane region spans 20–40 (TSLAISAAAIAFNPTFWNIVA). The Lumenal portion of the chain corresponds to 41-52 (RREYRTKFLTRA). Residues 53-74 (FGGNAQVACYFLAVTIFGLGLV) traverse the membrane as a helical segment. The Cytoplasmic portion of the chain corresponds to 75-101 (RDFLYERALRDQPSHPLLEGTYVKYAA). A helical transmembrane segment spans residues 102-122 (YALLALGNLLVITSTMRLGIT). Residue 106–108 (ALG) participates in S-adenosyl-L-methionine binding. Residues 123 to 165 (GTFLGDYFGILMDGIVTGFPFNVTSAPMYYGSTMSFLGTALLY) are Lumenal-facing. Residues 166 to 186 (GKPAGLLLTAWVLFVYIIAIQ) form a helical membrane-spanning segment. Residues 187-214 (FENPFTAEIYAKRDRERAKAAGTSKKEL) are Cytoplasmic-facing. 188–189 (EN) is an S-adenosyl-L-methionine binding site.

Belongs to the class VI-like SAM-binding methyltransferase superfamily. PEMT/PEM2 methyltransferase family.

It is found in the endoplasmic reticulum membrane. Its subcellular location is the mitochondrion membrane. The catalysed reaction is a 1,2-diacyl-sn-glycero-3-phospho-N-methylethanolamine + S-adenosyl-L-methionine = a 1,2-diacyl-sn-glycero-3-phospho-N,N-dimethylethanolamine + S-adenosyl-L-homocysteine + H(+). It catalyses the reaction a 1,2-diacyl-sn-glycero-3-phospho-N,N-dimethylethanolamine + S-adenosyl-L-methionine = a 1,2-diacyl-sn-glycero-3-phosphocholine + S-adenosyl-L-homocysteine + H(+). Its pathway is phospholipid metabolism; phosphatidylcholine biosynthesis. Its function is as follows. Catalyzes the second two steps of the methylation pathway of phosphatidylcholine biosynthesis, the SAM-dependent methylation of phosphatidylmonomethylethanolamine (PMME) to phosphatidyldimethylethanolamine (PDME) and of PDME to phosphatidylcholine (PC). This is Phosphatidyl-N-methylethanolamine N-methyltransferase from Neurospora crassa (strain ATCC 24698 / 74-OR23-1A / CBS 708.71 / DSM 1257 / FGSC 987).